A 133-amino-acid chain; its full sequence is Snaclec purpureotin subunit alpha (133 aa).

Disulfide bonds link Cys2/Cys13, Cys30/Cys127, and Cys102/Cys119. Residues 9–128 (FKQYCYQIIK…CEQKHIFMCK (120 aa)) form the C-type lectin domain.

This sequence belongs to the snaclec family. As to quaternary structure, homodimer (non-covalently linked) of heterodimer of alpha and beta subunits (disulfide-linked). In terms of tissue distribution, expressed by the venom gland.

The protein localises to the secreted. In terms of biological role, snaclec that induces platelet aggregation without any cofactor in a dose-dependent manner. Its platelet aggregation effect is blocked by echicetin, suggesting it is a GPIb-binding protein which binds to the same or a closely related GPIb site on platelets as echicetin. The chain is Snaclec purpureotin subunit alpha from Trimeresurus purpureomaculatus (Mangrove pit viper).